The chain runs to 270 residues: Formamidopyrimidine-DNA glycosylase (270 aa).

The active-site Schiff-base intermediate with DNA is the Pro2. The active-site Proton donor is the Glu3. Lys58 (proton donor; for beta-elimination activity) is an active-site residue. DNA is bound by residues His91, Arg110, and Arg151. The segment at 236–270 (FVYGRGGQPCKVCGTALREVKLGQRASVYCPRCQR) adopts an FPG-type zinc-finger fold. The active-site Proton donor; for delta-elimination activity is Arg260.

It belongs to the FPG family. Monomer. It depends on Zn(2+) as a cofactor.

It carries out the reaction Hydrolysis of DNA containing ring-opened 7-methylguanine residues, releasing 2,6-diamino-4-hydroxy-5-(N-methyl)formamidopyrimidine.. The catalysed reaction is 2'-deoxyribonucleotide-(2'-deoxyribose 5'-phosphate)-2'-deoxyribonucleotide-DNA = a 3'-end 2'-deoxyribonucleotide-(2,3-dehydro-2,3-deoxyribose 5'-phosphate)-DNA + a 5'-end 5'-phospho-2'-deoxyribonucleoside-DNA + H(+). Functionally, involved in base excision repair of DNA damaged by oxidation or by mutagenic agents. Acts as a DNA glycosylase that recognizes and removes damaged bases. Has a preference for oxidized purines, such as 7,8-dihydro-8-oxoguanine (8-oxoG). Has AP (apurinic/apyrimidinic) lyase activity and introduces nicks in the DNA strand. Cleaves the DNA backbone by beta-delta elimination to generate a single-strand break at the site of the removed base with both 3'- and 5'-phosphates. The polypeptide is Formamidopyrimidine-DNA glycosylase (Pseudomonas putida (strain GB-1)).